Reading from the N-terminus, the 193-residue chain is Ribonuclease HII (193 aa).

Positions 15–193 (YIVAGIDEAG…PYHRRSFKCC (179 aa)) constitute an RNase H type-2 domain. 3 residues coordinate a divalent metal cation: Asp21, Glu22, and Asp112.

Belongs to the RNase HII family. Mn(2+) is required as a cofactor. Mg(2+) serves as cofactor.

Its subcellular location is the cytoplasm. The enzyme catalyses Endonucleolytic cleavage to 5'-phosphomonoester.. Functionally, endonuclease that specifically degrades the RNA of RNA-DNA hybrids. In Rickettsia felis (strain ATCC VR-1525 / URRWXCal2) (Rickettsia azadi), this protein is Ribonuclease HII.